The primary structure comprises 156 residues: Ribonuclease H (156 aa).

Residues 7–148 (QDKIVMIATD…ADQLASDAAI (142 aa)) enclose the RNase H type-1 domain. Asp16, Glu54, Asp76, and Asp140 together coordinate Mg(2+).

The protein belongs to the RNase H family. As to quaternary structure, monomer. Mg(2+) serves as cofactor.

It localises to the cytoplasm. The catalysed reaction is Endonucleolytic cleavage to 5'-phosphomonoester.. Its function is as follows. Endonuclease that specifically degrades the RNA of RNA-DNA hybrids. This Zymomonas mobilis subsp. mobilis (strain ATCC 31821 / ZM4 / CP4) protein is Ribonuclease H (rnhA).